A 104-amino-acid polypeptide reads, in one-letter code: Pole-localizer protein TmaR (104 aa).

Coiled-coil stretches lie at residues 7 to 34 (IVNQ…NRKR) and 76 to 96 (SAEI…LTEE).

This sequence belongs to the pole-localizer TmaR family.

It is found in the cytoplasm. Functionally, pole-localizer protein involved in the regulation of several cellular processes. This is Pole-localizer protein TmaR from Vibrio atlanticus (strain LGP32) (Vibrio splendidus (strain Mel32)).